We begin with the raw amino-acid sequence, 372 residues long: Putative F-box/kelch-repeat protein At3g22730 (372 aa).

An F-box domain is found at 1–50 (MMMSDLSLDLVEEILSRVPATSLKRLRSTCKLWNALFKNPGFTKKQFLKA). Kelch repeat units follow at residues 155-204 (ILRC…SFKG), 245-293 (ALSV…PIRG), and 324-372 (KVYI…IIKE).

The chain is Putative F-box/kelch-repeat protein At3g22730 from Arabidopsis thaliana (Mouse-ear cress).